Reading from the N-terminus, the 1049-residue chain is Protein phosphatase Slingshot homolog 1 (1049 aa).

The segment covering 1-12 has biased composition (polar residues); that stretch reads MALVTLQRSPTP. Positions 1-28 are disordered; the sequence is MALVTLQRSPTPSAASSSASNSELEAGS. Alanine 2 is modified (N-acetylalanine). Low complexity predominate over residues 13 to 25; that stretch reads SAASSSASNSELE. Serine 37 and serine 57 each carry phosphoserine. A DEK-C domain is found at 249–304; the sequence is ERTERLIKAKLRSIMMSQDLENVTSKEIRNELEKQMNCNLKELKEFIDNEMLLILG. The Tyrosine-protein phosphatase domain occupies 308–449; the sequence is KPSLIFDHLY…LSEYEGILDA (142 aa). The active-site Phosphocysteine intermediate is the cysteine 393. Residues 456 to 499 are disordered; that stretch reads KLWRQQTDSSLQQPVDDPAGPGDFLPETPDGTPESQLPFLDDAA. Residues 458–468 are compositionally biased toward polar residues; the sequence is WRQQTDSSLQQ. Serine 515 is modified (phosphoserine). 4 disordered regions span residues 544–603, 693–787, 825–899, and 923–955; these read AAPP…RWGQ, HLAS…KPAK, HTKE…KSPP, and PTSS…KQRT. The segment covering 564–573 has biased composition (basic and acidic residues); it reads CEKDVKKKLE. At serine 576 the chain carries Phosphoserine. A compositionally biased stretch (low complexity) spans 731-742; that stretch reads GAALEPPASLLE. Residues 772-787 show a composition bias toward basic and acidic residues; the sequence is VIKEESSPKKDMKPAK. Phosphoserine is present on serine 897. Residues 897–1049 form an interaction with YWHAG region; sequence SPPPFFYRLD…LKSPSWMSKS (153 aa). Residues 925-943 are compositionally biased toward low complexity; it reads SSSMSSNLTRSSSSDSIHS. Serine 978 is modified (phosphoserine). The disordered stretch occupies residues 989–1049; that stretch reads TEDLSSEADP…LKSPSWMSKS (61 aa). A compositionally biased stretch (polar residues) spans 1001–1013; it reads VADSQDTTLSESS.

Belongs to the protein-tyrosine phosphatase family. In terms of assembly, interacts with actin and this stimulates phosphatase activity. Also interacts with LIMK1 and with the 14-3-3 proteins YWHAB, YWHAG, YWHAQ, and YWHAZ. Interaction with 14-3-3 proteins inhibits phosphatase activity and also blocks recruitment to lamellipodia and stimulation by actin. In terms of processing, phosphorylated. Inhibitory phosphorylation by PAK4 promotes binding to YWHAZ. Phosphorylation at Ser-978 is decreased by stimuli which promote actin reorganization and lamellipodia formation. Can be dephosphorylated and activated by PPP3CA/calcineurin A. Phosphorylation decreases immediately prior to telophase.

The protein localises to the cytoplasm. It is found in the cytoskeleton. The protein resides in the cell projection. Its subcellular location is the lamellipodium. It localises to the cleavage furrow. The protein localises to the midbody. It carries out the reaction O-phospho-L-tyrosyl-[protein] + H2O = L-tyrosyl-[protein] + phosphate. It catalyses the reaction O-phospho-L-seryl-[protein] + H2O = L-seryl-[protein] + phosphate. The enzyme catalyses O-phospho-L-threonyl-[protein] + H2O = L-threonyl-[protein] + phosphate. Functionally, protein phosphatase which regulates actin filament dynamics. Dephosphorylates and activates the actin binding/depolymerizing factor cofilin, which subsequently binds to actin filaments and stimulates their disassembly. Inhibitory phosphorylation of cofilin is mediated by LIMK1, which may also be dephosphorylated and inactivated by this protein. The polypeptide is Protein phosphatase Slingshot homolog 1 (Homo sapiens (Human)).